The sequence spans 1039 residues: Beta-galactosidase (1039 aa).

The substrate site is built by Asn-103 and Asp-201. Position 201 (Asp-201) interacts with Na(+). Mg(2+) contacts are provided by Glu-415, His-417, and Glu-460. Substrate contacts are provided by residues Glu-460 and 536–539; that span reads EYAH. Glu-460 acts as the Proton donor in catalysis. The active-site Nucleophile is the Glu-536. Asn-596 is a Mg(2+) binding site. Residues Phe-600 and Asn-603 each coordinate Na(+). Positions 603 and 1012 each coordinate substrate.

It belongs to the glycosyl hydrolase 2 family. As to quaternary structure, homotetramer. Requires Mg(2+) as cofactor. Na(+) serves as cofactor.

The catalysed reaction is Hydrolysis of terminal non-reducing beta-D-galactose residues in beta-D-galactosides.. Inhibited by zinc, copper and nickel ions. Activated by 2-mercaptoethanol and inhibited by EDTA in vitro. The polypeptide is Beta-galactosidase (lacZ) (Pseudoalteromonas haloplanktis (Alteromonas haloplanktis)).